The sequence spans 323 residues: Ubiquinone biosynthesis protein COQ4, mitochondrial (323 aa).

Positions 203, 204, 207, and 219 each coordinate Zn(2+).

It belongs to the COQ4 family. In terms of assembly, component of a multi-subunit COQ enzyme complex, composed of at least COQ3, COQ4, COQ5, COQ6, COQ7 and COQ9. It depends on Zn(2+) as a cofactor.

The protein resides in the mitochondrion inner membrane. It carries out the reaction a 4-hydroxy-3-methoxy-5-(all-trans-polyprenyl)benzoate + H(+) = a 2-methoxy-6-(all-trans-polyprenyl)phenol + CO2. It participates in cofactor biosynthesis; ubiquinone biosynthesis. Functionally, lyase that catalyzes the C1-decarboxylation of 4-hydroxy-3-methoxy-5-(all-trans-polyprenyl)benzoic acid into 2-methoxy-6-(all-trans-polyprenyl)phenol during ubiquinone biosynthesis. The protein is Ubiquinone biosynthesis protein COQ4, mitochondrial of Eremothecium gossypii (strain ATCC 10895 / CBS 109.51 / FGSC 9923 / NRRL Y-1056) (Yeast).